The primary structure comprises 188 residues: MKAIDKKIERFARYLQRQNNLDHIQFLKIRLGLQVALGNFFKTIVTYGVALLFHTFLYTLITHLTYFFVRRFAHGAHARSSLLCHIQNLVLFVALPWSIVHFQVSWTFMIFVAFIAFIIIICYAPSATKKQPILPHLRKKKKRNAILISICFLVLMLFVSEPYMQLIALGMCIEAITLLPIFFSKEET.

The next 4 membrane-spanning stretches (helical) occupy residues 49 to 69, 82 to 102, 104 to 124, and 163 to 183; these read VALLFHTFLYTLITHLTYFFV, LLCHIQNLVLFVALPWSIVHF, VSWTFMIFVAFIAFIIIICYA, and YMQLIALGMCIEAITLLPIFF.

It belongs to the AgrB family.

Its subcellular location is the cell membrane. Essential for the production of a quorum sensing system signal molecule, the autoinducing peptide (AIP). This quorum sensing system is responsible for the regulation of the expression of virulence factor genes. Involved in the proteolytic processing of AgrD, the precursor of AIP. This chain is Accessory gene regulator protein B, found in Staphylococcus lugdunensis.